Here is a 1169-residue protein sequence, read N- to C-terminus: Transcription-repair-coupling factor (1169 aa).

Residues 634 to 795 form the Helicase ATP-binding domain; that stretch reads DMERARPMDR…MLGVRDLSVI (162 aa). Position 647 to 654 (647 to 654) interacts with ATP; sequence GDVGYGKT. Positions 748-751 match the DEEQ box motif; it reads DEEQ. A Helicase C-terminal domain is found at 809–970; it reads VLEQNTNFIK…GFKIAMRDLN (162 aa).

In the N-terminal section; belongs to the UvrB family. The protein in the C-terminal section; belongs to the helicase family. RecG subfamily.

The protein resides in the cytoplasm. Its function is as follows. Couples transcription and DNA repair by recognizing RNA polymerase (RNAP) stalled at DNA lesions. Mediates ATP-dependent release of RNAP and its truncated transcript from the DNA, and recruitment of nucleotide excision repair machinery to the damaged site. The chain is Transcription-repair-coupling factor from Staphylococcus epidermidis (strain ATCC 35984 / DSM 28319 / BCRC 17069 / CCUG 31568 / BM 3577 / RP62A).